The sequence spans 327 residues: DNA repair protein XRCC4 (327 aa).

The tract at residues 1–211 is interaction with IFFO1; that stretch reads MERKVSRISL…QLEKNLKPER (211 aa). Ser-53 carries the post-translational modification Phosphoserine. 2 coiled-coil regions span residues 133–153 and 183–213; these read IAEKQAKNEHLQKENDRLLRD and LNEKKTKIRSLHKLLDEIQQLEKNLKPERET. 2 interaction with LIG4 regions span residues 179-210 and 179-211; these read FILVLNEKKTKIRSLHKLLDEIQQLEKNLKPE and FILVLNEKKTKIRSLHKLLDEIQQLEKNLKPER. Ser-192 is subject to Phosphoserine. Residue Lys-208 forms a Glycyl lysine isopeptide (Lys-Gly) (interchain with G-Cter in SUMO) linkage. Tyr-226 bears the Phosphotyrosine mark. The residue at position 229 (Ser-229) is a Phosphoserine. Thr-230 bears the Phosphothreonine mark. Phosphoserine occurs at positions 249 and 253. Residues 255–327 form a disordered region; sequence DVTDIAPSRK…RNSSPEDIFD (73 aa). A Nuclear localization signal motif is present at residues 263-268; it reads RKRRHH. Lys-289 is covalently cross-linked (Glycyl lysine isopeptide (Lys-Gly) (interchain with G-Cter in ubiquitin)). Phosphoserine occurs at positions 294, 295, 308, and 313. A compositionally biased stretch (polar residues) spans 308-327; it reads SAGNMSLETLRNSSPEDIFD. At Thr-316 the chain carries Phosphothreonine. A phosphoserine mark is found at Ser-320 and Ser-321.

This sequence belongs to the XRCC4-XLF family. XRCC4 subfamily. As to quaternary structure, homodimer and homotetramer in solution. Interacts with NHEJ1/XLF; the interaction is direct and is mediated via a head-to-head interaction between N-terminal head regions. Interacts with LIG4; the LIG4-XRCC4 subcomplex has a 1:2 stoichiometry and XRCC4 is required for LIG4 stability. Component of the core long-range non-homologous end joining (NHEJ) complex (also named DNA-PK complex) composed of PRKDC, LIG4, XRCC4, XRCC6/Ku70, XRCC5/Ku86 and NHEJ1/XLF. Additional component of the NHEJ complex includes PAXX. Following autophosphorylation, PRKDC dissociates from DNA, leading to formation of the short-range NHEJ complex, composed of LIG4, XRCC4, XRCC6/Ku70, XRCC5/Ku86 and NHEJ1/XLF. Interacts with PRKDC; the interaction is direct. Interacts with XRCC6/Ku70; the interaction is direct. Interacts with APTX and APLF. Forms a heterotetramer with IFFO1; the interaction involves LIG4-free XRCC4 and leads to the relocalization of IFFO1 to the sites of DNA damage. Interacts with PNKP; mainly interacts with PNKP when phosphorylated at Thr-230, but is also able to interact at much lower level with PNKP when not unphosphorylated. Interacts with POLL (DNA polymerase lambda). Interacts with XKR4; interacts with the processed form of XKR4, which is cleaved by caspase. In terms of processing, phosphorylated by PRKDC at the C-terminus in response to DNA damage; Ser-253 constitutes the main phosphorylation sites. Phosphorylations by PRKDC at the C-terminus of XRCC4 and NHEJ1/XLF are highly redundant and regulate ability of the XRCC4-NHEJ1/XLF subcomplex to bridge DNA. Phosphorylation by PRKDC does not prevent interaction with NHEJ1/XLF but disrupts ability to bridge DNA and promotes detachment from DNA. Phosphorylation at Ser-320 and Ser-321 by PRKDC promotes recognition by the SCF(FBXW7) complex and subsequent ubiquitination via 'Lys-63'-linked ubiquitin. Phosphorylation at Thr-230 by CK2 promotes interaction with PNKP; regulating PNKP activity and localization to DNA damage sites. Phosphorylation by CK2 promotes interaction with APTX. Post-translationally, ubiquitinated at Lys-289 by the SCF(FBXW7) complex via 'Lys-63'-linked ubiquitination, thereby promoting double-strand break repair: the SCF(FBXW7) complex specifically recognizes XRCC4 when phosphorylated at Ser-320 and Ser-321 by PRKDC, and 'Lys-63'-linked ubiquitination facilitates DNA non-homologous end joining (NHEJ) by enhancing association with XRCC5/Ku80 and XRCC6/Ku70. Monoubiquitinated. Undergoes proteolytic processing by caspase-3 (CASP3). This generates the protein XRCC4, C-terminus (XRCC4/C), which translocates to the cytoplasm and activates phospholipid scramblase activity of XKR4, thereby promoting phosphatidylserine exposure on apoptotic cell surface.

It is found in the nucleus. It localises to the chromosome. The protein localises to the cytoplasm. Functionally, DNA non-homologous end joining (NHEJ) core factor, required for double-strand break repair and V(D)J recombination. Acts as a scaffold protein that regulates recruitment of other proteins to DNA double-strand breaks (DSBs). Associates with NHEJ1/XLF to form alternating helical filaments that bridge DNA and act like a bandage, holding together the broken DNA until it is repaired. The XRCC4-NHEJ1/XLF subcomplex binds to the DNA fragments of a DSB in a highly diffusive manner and robustly bridges two independent DNA molecules, holding the broken DNA fragments in close proximity to one other. The mobility of the bridges ensures that the ends remain accessible for further processing by other repair factors. Plays a key role in the NHEJ ligation step of the broken DNA during DSB repair via direct interaction with DNA ligase IV (LIG4): the LIG4-XRCC4 subcomplex reseals the DNA breaks after the gap filling is completed. XRCC4 stabilizes LIG4, regulates its subcellular localization and enhances LIG4's joining activity. Binding of the LIG4-XRCC4 subcomplex to DNA ends is dependent on the assembly of the DNA-dependent protein kinase complex DNA-PK to these DNA ends. Promotes displacement of PNKP from processed strand break termini. Its function is as follows. Acts as an activator of the phospholipid scramblase activity of XKR4. This form, which is generated upon caspase-3 (CASP3) cleavage, translocates into the cytoplasm and interacts with XKR4, thereby promoting phosphatidylserine scramblase activity of XKR4 and leading to phosphatidylserine exposure on apoptotic cell surface. This Cricetulus griseus (Chinese hamster) protein is DNA repair protein XRCC4.